The chain runs to 685 residues: UvrABC system protein C (685 aa).

Positions 15–93 constitute a GIY-YIG domain; sequence ALPGVYRYFD…IKTQNPRFNI (79 aa). A UVR domain is found at 214–249; sequence QELLQAMEARMMAYSGQLAFEQAAEVRNQMQALSRV. Residues 365-388 are compositionally biased toward low complexity; the sequence is AQGGDHAPAAQGGDPPPAASSGGH. The tract at residues 365-391 is disordered; sequence AQGGDHAPAAQGGDPPPAASSGGHPLR.

It belongs to the UvrC family. As to quaternary structure, interacts with UvrB in an incision complex.

The protein resides in the cytoplasm. In terms of biological role, the UvrABC repair system catalyzes the recognition and processing of DNA lesions. UvrC both incises the 5' and 3' sides of the lesion. The N-terminal half is responsible for the 3' incision and the C-terminal half is responsible for the 5' incision. In Verminephrobacter eiseniae (strain EF01-2), this protein is UvrABC system protein C.